The chain runs to 158 residues: uncharacterized protein (158 aa).

The HTH asnC-type domain occupies 12-73 (LDEIDRAILR…LINPFKAGYE (62 aa)). A DNA-binding region (H-T-H motif) is located at residues 31-50 (YSEISRRINVPESTVRARVN).

This is an uncharacterized protein from Pyrococcus abyssi (strain GE5 / Orsay).